Consider the following 960-residue polypeptide: Lon protease homolog, mitochondrial (960 aa).

Residues 1–56 constitute a mitochondrion transit peptide; the sequence is MYRAGALVLRSATLRRTRFLAAHQNFATISSQRSSVLLAKSLESSIGGAGNQKKFY. Residues 92 to 352 enclose the Lon N-terminal domain; the sequence is VPILAINRYP…IALLLIQKEK (261 aa). The disordered stretch occupies residues 195–250; sequence PKTDTPLNGRRARGKRAGLPPTPPPTPPLSTPTSAPEASATSPEEKEEKKDPERKG. Pro residues predominate over residues 214 to 224; the sequence is PPTPPPTPPLS. A compositionally biased stretch (low complexity) spans 225–236; sequence TPTSAPEASATS. A compositionally biased stretch (basic and acidic residues) spans 237–250; it reads PEEKEEKKDPERKG. Residue 505–512 participates in ATP binding; the sequence is GPPGVGKT. The disordered stretch occupies residues 712 to 748; that stretch reads EQQPEDEQPAATTAISENSDAEPVSTPSDPPTFTPEK. The 188-residue stretch at 773 to 960 folds into the Lon proteolytic domain; it reads VTPPGVIMGL…YDELYEHLFQ (188 aa). Catalysis depends on residues S867 and K910.

The protein belongs to the peptidase S16 family. In terms of assembly, homohexamer or homoheptamer. Organized in a ring with a central cavity.

It is found in the mitochondrion matrix. The catalysed reaction is Hydrolysis of proteins in presence of ATP.. Its function is as follows. ATP-dependent serine protease that mediates the selective degradation of misfolded, unassembled or oxidatively damaged polypeptides as well as certain short-lived regulatory proteins in the mitochondrial matrix. May also have a chaperone function in the assembly of inner membrane protein complexes. Participates in the regulation of mitochondrial gene expression and in the maintenance of the integrity of the mitochondrial genome. Binds to mitochondrial DNA in a site-specific manner. This Caenorhabditis briggsae protein is Lon protease homolog, mitochondrial.